Here is a 212-residue protein sequence, read N- to C-terminus: Probable GTP-binding protein EngB (212 aa).

The 173-residue stretch at Ser-38 to Phe-210 folds into the EngB-type G domain. Residues Gly-46–Ser-53, Gly-73–Gln-77, Asp-91–Gly-94, Thr-158–Asp-161, and Val-189–Asn-191 contribute to the GTP site. Mg(2+)-binding residues include Ser-53 and Thr-75.

This sequence belongs to the TRAFAC class TrmE-Era-EngA-EngB-Septin-like GTPase superfamily. EngB GTPase family. Mg(2+) is required as a cofactor.

Necessary for normal cell division and for the maintenance of normal septation. This is Probable GTP-binding protein EngB from Rickettsia rickettsii (strain Sheila Smith).